The following is a 142-amino-acid chain: Probable signal recognition particle 19 kDa protein (142 aa).

The interval 115-142 (KTRQPGYTAPSVASSSAAAAGKKNKKKK) is disordered. A compositionally biased stretch (low complexity) spans 123 to 135 (APSVASSSAAAAG).

This sequence belongs to the SRP19 family. Component of a signal recognition particle complex that consists of a 7SL RNA molecule of 300 nucleotides and six protein subunits: srpa-72, srpa-68, SRP54, F37F2.2/SRP19, F25G6.8/SRP14 and ZK512.4/SRP9.

It is found in the cytoplasm. The protein localises to the nucleus. The protein resides in the nucleolus. Its function is as follows. Component of the signal recognition particle (SRP) complex, a ribonucleoprotein complex that mediates the cotranslational targeting of secretory and membrane proteins to the endoplasmic reticulum (ER). Binds directly to 7SL RNA. Mediates binding of SRP54 to the SRP complex. This is Probable signal recognition particle 19 kDa protein from Caenorhabditis elegans.